A 201-amino-acid chain; its full sequence is Ribonuclease HII (201 aa).

An RNase H type-2 domain is found at 14-201; the sequence is NLIAGVDEVG…KPVKRILGIE (188 aa). A divalent metal cation-binding residues include Asp20, Glu21, and Asp112.

Belongs to the RNase HII family. Requires Mn(2+) as cofactor. Mg(2+) is required as a cofactor.

It is found in the cytoplasm. It catalyses the reaction Endonucleolytic cleavage to 5'-phosphomonoester.. Its function is as follows. Endonuclease that specifically degrades the RNA of RNA-DNA hybrids. The polypeptide is Ribonuclease HII (Photobacterium profundum (strain SS9)).